An 87-amino-acid chain; its full sequence is Prolactin-releasing peptide (87 aa).

Positions 1-22 (MKVLRAWLLCLLMLGLALRGAA) are cleaved as a signal peptide. Phe53 carries the post-translational modification Phenylalanine amide. Residues 58 to 87 (ATLGDVPKPGLRPRLTCFPLEGGAMSSQDG) constitute a propeptide that is removed on maturation.

As to expression, medulla oblongata and hypothalamus.

The protein localises to the secreted. Functionally, stimulates prolactin (PRL) release and regulates the expression of prolactin through its receptor GPR10. May stimulate lactotrophs directly to secrete PRL. This chain is Prolactin-releasing peptide (PRLH), found in Homo sapiens (Human).